The following is a 670-amino-acid chain: DNA ligase (670 aa).

Residues 32-36, 81-82, and Glu-113 contribute to the NAD(+) site; these read DAEYD and SL. The N6-AMP-lysine intermediate role is filled by Lys-115. Residues Arg-136, Glu-173, Lys-290, and Lys-314 each coordinate NAD(+). Residues Cys-406, Cys-409, Cys-424, and Cys-430 each coordinate Zn(2+). The region spanning 592 to 670 is the BRCT domain; that stretch reads EIDSPFAGKT…EQEMMRLLGE (79 aa).

The protein belongs to the NAD-dependent DNA ligase family. LigA subfamily. Requires Mg(2+) as cofactor. Mn(2+) serves as cofactor.

It catalyses the reaction NAD(+) + (deoxyribonucleotide)n-3'-hydroxyl + 5'-phospho-(deoxyribonucleotide)m = (deoxyribonucleotide)n+m + AMP + beta-nicotinamide D-nucleotide.. Its function is as follows. DNA ligase that catalyzes the formation of phosphodiester linkages between 5'-phosphoryl and 3'-hydroxyl groups in double-stranded DNA using NAD as a coenzyme and as the energy source for the reaction. It is essential for DNA replication and repair of damaged DNA. The polypeptide is DNA ligase (Erwinia tasmaniensis (strain DSM 17950 / CFBP 7177 / CIP 109463 / NCPPB 4357 / Et1/99)).